A 462-amino-acid polypeptide reads, in one-letter code: Ribosomal oxygenase 2 (462 aa).

The segment at 1–24 (MPKKARPAGDGKEQGPAPKQVKVE) is disordered. In terms of domain architecture, JmjC spans 139-271 (QPQRFKDELW…SSWGDFLLDT (133 aa)). His179, Asp181, and His240 together coordinate Fe cation. Residue Ser308 is modified to Phosphoserine.

Belongs to the ROX family. MINA53 subfamily. Fe(2+) is required as a cofactor.

The protein localises to the nucleus. The protein resides in the nucleolus. It carries out the reaction L-histidyl-[ribosomal protein uL15] + 2-oxoglutarate + O2 = (3S)-3-hydroxy-L-histidyl-[ribosomal protein uL15] + succinate + CO2. The enzyme catalyses L-histidyl-[protein] + 2-oxoglutarate + O2 = (3S)-3-hydroxy-L-histidyl-[protein] + succinate + CO2. Functionally, oxygenase that can act as both a histone lysine demethylase and a ribosomal histidine hydroxylase. Is involved in the demethylation of trimethylated 'Lys-9' on histone H3 (H3K9me3), leading to an increase in ribosomal RNA expression. Also catalyzes the hydroxylation of 60S ribosomal protein L27a on 'His-39'. May play an important role in cell growth and survival. May be involved in ribosome biogenesis, most likely during the assembly process of pre-ribosomal particles. The chain is Ribosomal oxygenase 2 (RIOX2) from Bos taurus (Bovine).